The primary structure comprises 164 residues: Lipoprotein signal peptidase (164 aa).

Transmembrane regions (helical) follow at residues 12–32 (WLWL…LILQ), 70–90 (WFFA…MYRL), and 102–122 (ALII…GFVV). Residues aspartate 123 and aspartate 141 contribute to the active site. A helical transmembrane segment spans residues 137–157 (FNLADTAICVGAALIVLEGFL).

It belongs to the peptidase A8 family.

Its subcellular location is the cell inner membrane. The enzyme catalyses Release of signal peptides from bacterial membrane prolipoproteins. Hydrolyzes -Xaa-Yaa-Zaa-|-(S,diacylglyceryl)Cys-, in which Xaa is hydrophobic (preferably Leu), and Yaa (Ala or Ser) and Zaa (Gly or Ala) have small, neutral side chains.. It functions in the pathway protein modification; lipoprotein biosynthesis (signal peptide cleavage). Its function is as follows. This protein specifically catalyzes the removal of signal peptides from prolipoproteins. The sequence is that of Lipoprotein signal peptidase from Shigella boydii serotype 4 (strain Sb227).